A 731-amino-acid chain; its full sequence is MSSSLKIASTQEARQYFDTDRVVVDAVGSDFTDVGAVIAMDYETDVIDAADATKFGIPVFAVTKDAQAISADELKKIFHIIDLENKFDATVNAREIETAVNNYEDSILPPFFKSLKEYVSRGLIQFDCPGHQGGQYYRKHPAGREFYDFFGETVFRADLCNADVALGDLLIHEGPAVAAEKHAARVYNADKTYFVLGGSSNANNTVTSALVSNGDLVLFDRNNHKSVYNSALAMAGGRPVYLQTNRNPYGFIGGIYDSDFDEKKIRELAAKVDPERAKWKRPFRLAVIQLGTYDGTIYNAHEVVKRIGHLCDYIEFDSAWVGYEQFIPMMRNSSPLLIDDLGPEDPGIIVVQSVHKQQAGFSQTSQIHKKDSHIKGQLRYCDHKHFNNSFNLFMSTSPFYPMYAALDVNAAMQEGEAGRKLWHDLLITTIEARKKLIKAGSMFRPFVPPVVNGKKWEDGDTEDMANNIDYWRFEKGAKWHAYEGYGDNQYYVDPNKFMLTTPGINPETGDYEDFGVPATIVANYLRDHGIIPEKSDLNSILFLMTPAETPAKMNNLITQLLQLQRLIEEDAPLKQVLPSIYAANEERYNGYTIRELCQELHDFYKNNNTFTYQKRLFLREFFPEQGMLPYEARQEFIRNHNKLVPLNKIEGEIALEGALPYPPGVFCVAPGEKWSETAVKYFTILQDGINNFPGFAPEIQGVYFKQEGDKVVAYGEVYDAEVAKNDDRYNN.

Lys356 bears the N6-(pyridoxal phosphate)lysine mark.

It belongs to the Orn/Lys/Arg decarboxylase class-I family. Dodecamer. Requires pyridoxal 5'-phosphate as cofactor.

The enzyme catalyses L-ornithine + H(+) = putrescine + CO2. In Lactobacillus sp. (strain 30a), this protein is Inducible ornithine decarboxylase (odcI).